Reading from the N-terminus, the 423-residue chain is Histidine--tRNA ligase (423 aa).

It belongs to the class-II aminoacyl-tRNA synthetase family. In terms of assembly, homodimer.

It localises to the cytoplasm. The enzyme catalyses tRNA(His) + L-histidine + ATP = L-histidyl-tRNA(His) + AMP + diphosphate + H(+). This chain is Histidine--tRNA ligase (hisS), found in Mycobacterium bovis (strain ATCC BAA-935 / AF2122/97).